The primary structure comprises 386 residues: F420 non-reducing hydrogenase II small subunit (386 aa).

The tat-type signal signal peptide spans 1–51 (MVEMSTGMKNLTRTLESMDFLKMDRRTFMKAVSALGATAFLGTYQTEIVNA). The [4Fe-4S] cluster site is built by C67, C70, C178, C227, H273, C276, C296, and C302. 3 residues coordinate [3Fe-4S] cluster: C311, C330, and C333.

The protein belongs to the [NiFe]/[NiFeSe] hydrogenase small subunit family. As to quaternary structure, composed of a large subunit (VhtA), a small subunit (VhtG) and a cytochrome subunit (VhtC). [4Fe-4S] cluster is required as a cofactor. It depends on [3Fe-4S] cluster as a cofactor. Post-translationally, predicted to be exported by the Tat system. The position of the signal peptide cleavage has not been experimentally proven.

The protein localises to the cell membrane. The catalysed reaction is methanophenazine + H2 = dihydromethanophenazine. Its function is as follows. Part of the F420 non-reducing hydrogenase II complex that catalyzes the reduction of methanophenazine to dihydromethanophenazine. This chain is F420 non-reducing hydrogenase II small subunit, found in Methanosarcina mazei (strain ATCC BAA-159 / DSM 3647 / Goe1 / Go1 / JCM 11833 / OCM 88) (Methanosarcina frisia).